The primary structure comprises 63 residues: Cytochrome c oxidase subunit 7C, mitochondrial (63 aa).

A mitochondrion-targeting transit peptide spans 1 to 16 (MLGQSIRRFTTSVVRR). Residues 17–33 (SHYEEGPGKNLPFSVEN) are Mitochondrial matrix-facing. An N6-acetyllysine; alternate modification is found at Lys-25. N6-succinyllysine; alternate is present on Lys-25. Residues 34-60 (KWSLLAKMCLYFGSAFATPFLIVRHQL) form a helical membrane-spanning segment. Residues 61-63 (LKT) are Mitochondrial intermembrane-facing.

It belongs to the cytochrome c oxidase VIIc family. As to quaternary structure, component of the cytochrome c oxidase (complex IV, CIV), a multisubunit enzyme composed of 14 subunits. The complex is composed of a catalytic core of 3 subunits MT-CO1, MT-CO2 and MT-CO3, encoded in the mitochondrial DNA, and 11 supernumerary subunits COX4I, COX5A, COX5B, COX6A, COX6B, COX6C, COX7A, COX7B, COX7C, COX8 and NDUFA4, which are encoded in the nuclear genome. The complex exists as a monomer or a dimer and forms supercomplexes (SCs) in the inner mitochondrial membrane with NADH-ubiquinone oxidoreductase (complex I, CI) and ubiquinol-cytochrome c oxidoreductase (cytochrome b-c1 complex, complex III, CIII), resulting in different assemblies (supercomplex SCI(1)III(2)IV(1) and megacomplex MCI(2)III(2)IV(2)). Interacts with RAB5IF.

The protein localises to the mitochondrion inner membrane. The protein operates within energy metabolism; oxidative phosphorylation. In terms of biological role, component of the cytochrome c oxidase, the last enzyme in the mitochondrial electron transport chain which drives oxidative phosphorylation. The respiratory chain contains 3 multisubunit complexes succinate dehydrogenase (complex II, CII), ubiquinol-cytochrome c oxidoreductase (cytochrome b-c1 complex, complex III, CIII) and cytochrome c oxidase (complex IV, CIV), that cooperate to transfer electrons derived from NADH and succinate to molecular oxygen, creating an electrochemical gradient over the inner membrane that drives transmembrane transport and the ATP synthase. Cytochrome c oxidase is the component of the respiratory chain that catalyzes the reduction of oxygen to water. Electrons originating from reduced cytochrome c in the intermembrane space (IMS) are transferred via the dinuclear copper A center (CU(A)) of subunit 2 and heme A of subunit 1 to the active site in subunit 1, a binuclear center (BNC) formed by heme A3 and copper B (CU(B)). The BNC reduces molecular oxygen to 2 water molecules using 4 electrons from cytochrome c in the IMS and 4 protons from the mitochondrial matrix. This is Cytochrome c oxidase subunit 7C, mitochondrial (COX7C) from Pongo pygmaeus (Bornean orangutan).